Consider the following 352-residue polypeptide: Photosystem II D2 protein (352 aa).

Residues 40–60 (CAFMALGGWLTGTTFVTSWYT) form a helical membrane-spanning segment. His-117 lines the chlorophyll a pocket. The chain crosses the membrane as a helical span at residues 124–140 (GFMLRQFEIARLVGIRP). Pheophytin a is bound by residues Gln-129 and Asn-142. A helical membrane pass occupies residues 152–165 (VFVSVFLMYPLGQS). Residue His-197 participates in chlorophyll a binding. Residues 207 to 227 (GALLCAIHGATVENTLFEDSD) form a helical membrane-spanning segment. Positions 214 and 261 each coordinate a plastoquinone. His-214 is a Fe cation binding site. Residue His-268 participates in Fe cation binding. A helical membrane pass occupies residues 278–294 (GLWMSSVGIVGLALNLR).

The protein belongs to the reaction center PufL/M/PsbA/D family. As to quaternary structure, PSII is composed of 1 copy each of membrane proteins PsbA, PsbB, PsbC, PsbD, PsbE, PsbF, PsbH, PsbI, PsbJ, PsbK, PsbL, PsbM, PsbT, PsbX, PsbY, PsbZ, Psb30/Ycf12, peripheral proteins PsbO, CyanoQ (PsbQ), PsbU, PsbV and a large number of cofactors. It forms dimeric complexes. The D1/D2 heterodimer binds P680, chlorophylls that are the primary electron donor of PSII, and subsequent electron acceptors. It shares a non-heme iron and each subunit binds pheophytin, quinone, additional chlorophylls, carotenoids and lipids. There is also a Cl(-1) ion associated with D1 and D2, which is required for oxygen evolution. The PSII complex binds additional chlorophylls, carotenoids and specific lipids. serves as cofactor.

It localises to the cellular thylakoid membrane. The enzyme catalyses 2 a plastoquinone + 4 hnu + 2 H2O = 2 a plastoquinol + O2. In terms of biological role, photosystem II (PSII) is a light-driven water:plastoquinone oxidoreductase that uses light energy to abstract electrons from H(2)O, generating O(2) and a proton gradient subsequently used for ATP formation. It consists of a core antenna complex that captures photons, and an electron transfer chain that converts photonic excitation into a charge separation. The D1/D2 (PsbA/PsbD) reaction center heterodimer binds P680, the primary electron donor of PSII as well as several subsequent electron acceptors. D2 is needed for assembly of a stable PSII complex. This is Photosystem II D2 protein from Picosynechococcus sp. (strain ATCC 27264 / PCC 7002 / PR-6) (Agmenellum quadruplicatum).